Consider the following 464-residue polypeptide: MALVALVAGARLGRRLSGPGLGRGHWTAAGRSRSRREAAEAEAEVPVVQYVGERAARADRVFVWGFSFSGALGVPSFVVPSSGPGPRAGARPRRRIQPVPYRLELDQKISSAACGYGFTLLSSKTADVTKVWGMGLNKDSQLGFHRSRKDKTRGYEYVLEPSPVSLPLDRPQETRVLQVSCGRAHSLVLTDREGVFSMGNNSYGQCGRKVVENEIYSESHRVHRMQDFDGQVVQVACGQDHSLFLTDKGEVYSCGWGADGQTGLGHYNITSSPTKLGGDLAGVNVIQVATYGDCCLAVSADGGLFGWGNSEYLQLASVTDSTQVNVPRCLHFSGVGKVRQAACGGTGCAVLNGEGHVFVWGYGILGKGPNLVESAVPEMIPPTLFGLTEFNPEIQVSRIRCGLSHFAALTNKGELFVWGKNIRGCLGIGRLEDQYFPWRVTMPGEPVDVACGVDHMVTLAKSFI.

The transit peptide at 1-37 directs the protein to the mitochondrion; that stretch reads MALVALVAGARLGRRLSGPGLGRGHWTAAGRSRSRRE. RCC1 repeat units follow at residues 58 to 124, 128 to 191, 193 to 247, 248 to 300, 302 to 353, 354 to 411, and 412 to 461; these read ADRV…LSSK, VTKV…VLTD, EGVF…FLTD, KGEV…AVSA, GGLF…VLNG, EGHV…ALTN, and KGEL…TLAK.

Forms a regulatory protein-RNA complex, consisting of RCC1L, NGRN, RPUSD3, RPUSD4, TRUB2, FASTKD2 and 16S mt-rRNA. Interacts with 16S mt-rRNA; this interaction is direct. Interacts with OPA1; this interaction is direct. As to quaternary structure, asociates with the mitochondrial ribosome large subunit (mt-LSU). In terms of assembly, asociates with the mitochondrial ribosome small subunit (mt-SSU). In terms of tissue distribution, ubiquitous.

It localises to the mitochondrion membrane. The protein localises to the mitochondrion inner membrane. Guanine nucleotide exchange factor (GEF) for mitochondrial dynamin-related GTPase OPA1. Activates OPA1, by exchanging bound GDP for free GTP, and drives OPA1 and MFN1-dependent mitochondrial fusion. Plays an essential role in mitochondrial ribosome biogenesis. As a component of a functional protein-RNA module, consisting of RCC1L, NGRN, RPUSD3, RPUSD4, TRUB2, FASTKD2 and 16S mitochondrial ribosomal RNA (16S mt-rRNA), controls 16S mt-rRNA abundance and is required for intra-mitochondrial translation of core subunits of the oxidative phosphorylation system. In terms of biological role, plays an essential role in mitochondrial ribosome biogenesis via its association with GTPases that play a role in the assembly of the large ribosome subunit. Functionally, plays an essential role in mitochondrial ribosome biogenesis via its association with GTPases that play a role in the assembly of the small ribosome subunit. In Homo sapiens (Human), this protein is RCC1-like G exchanging factor-like protein.